Here is a 656-residue protein sequence, read N- to C-terminus: Methylenetetrahydrofolate reductase (NADPH) (656 aa).

Residues methionine 1 to asparagine 12 are compositionally biased toward polar residues. Positions methionine 1–arginine 44 are disordered. Phosphoserine occurs at positions 9, 10, 18, 20, 21, 23, 25, 26, 29, and 30. Threonine 34 bears the Phosphothreonine mark. Glutamate 63 functions as the Proton donor/acceptor in the catalytic mechanism. Glutamate 63–arginine 68 serves as a coordination point for NAD(+). The residue at position 90 (tyrosine 90) is a Phosphotyrosine. Residue threonine 94 is modified to Phosphothreonine. Threonine 94 to tryptophan 95 serves as a coordination point for NAD(+). Residue threonine 94–tryptophan 95 participates in FAD binding. Serine 103 is modified (phosphoserine). Residues histidine 127, arginine 157–aspartate 159, tyrosine 174–alanine 175, tyrosine 197, histidine 201–alanine 204, aspartate 210, and lysine 217 each bind FAD. Aspartate 159 is a binding site for substrate. Glutamine 228, tyrosine 321, and arginine 325 together coordinate substrate. Phosphoserine is present on serine 394. At threonine 451 the chain carries Phosphothreonine. Residues asparagine 456, alanine 461 to threonine 464, threonine 481 to glutamine 485, threonine 560, and threonine 573 each bind S-adenosyl-L-methionine.

This sequence belongs to the methylenetetrahydrofolate reductase family. As to quaternary structure, homodimer. Requires FAD as cofactor. In terms of processing, phosphorylation of an N-terminal serine-rich phosphorylation region increases sensitivity to S-adenosylmethionine and inhibition.

The catalysed reaction is (6S)-5-methyl-5,6,7,8-tetrahydrofolate + NADP(+) = (6R)-5,10-methylene-5,6,7,8-tetrahydrofolate + NADPH + H(+). It participates in one-carbon metabolism; tetrahydrofolate interconversion. Its activity is regulated as follows. Allosterically regulated by S-adenosylmethionine (SAM). In terms of biological role, catalyzes the conversion of 5,10-methylenetetrahydrofolate to 5-methyltetrahydrofolate, a cosubstrate for homocysteine remethylation to methionine. Represents a key regulatory connection between the folate and methionine cycles. This Homo sapiens (Human) protein is Methylenetetrahydrofolate reductase (NADPH).